The sequence spans 124 residues: uncharacterized protein (124 aa).

The helical transmembrane segment at 2–22 (AIIIAIIAAVIVIAALITFNV) threads the bilayer. Residues 24–124 (NASPGPEKQE…ALLSMKNKKK (101 aa)) are disordered. Basic and acidic residues-rich tracts occupy residues 30 to 58 (EKQE…RAAE), 67 to 81 (DSPK…DDIY), and 89 to 113 (KHSD…RSYR).

Its subcellular location is the membrane. This is an uncharacterized protein from Bacillus subtilis (strain 168).